We begin with the raw amino-acid sequence, 238 residues long: 2-C-methyl-D-erythritol 4-phosphate cytidylyltransferase (238 aa).

It belongs to the IspD/TarI cytidylyltransferase family. IspD subfamily.

It catalyses the reaction 2-C-methyl-D-erythritol 4-phosphate + CTP + H(+) = 4-CDP-2-C-methyl-D-erythritol + diphosphate. Its pathway is isoprenoid biosynthesis; isopentenyl diphosphate biosynthesis via DXP pathway; isopentenyl diphosphate from 1-deoxy-D-xylulose 5-phosphate: step 2/6. Its function is as follows. Catalyzes the formation of 4-diphosphocytidyl-2-C-methyl-D-erythritol from CTP and 2-C-methyl-D-erythritol 4-phosphate (MEP). This Salinibacter ruber (strain DSM 13855 / M31) protein is 2-C-methyl-D-erythritol 4-phosphate cytidylyltransferase.